The sequence spans 154 residues: Ribosome maturation factor RimP (154 aa).

Belongs to the RimP family.

Its subcellular location is the cytoplasm. Functionally, required for maturation of 30S ribosomal subunits. This chain is Ribosome maturation factor RimP, found in Heliobacterium modesticaldum (strain ATCC 51547 / Ice1).